A 167-amino-acid chain; its full sequence is NAD(P)H-quinone oxidoreductase subunit I, chloroplastic (167 aa).

2 consecutive 4Fe-4S ferredoxin-type domains span residues 55 to 84 and 95 to 124; these read GRIH…VDWK and LNYS…MTEE. Residues Cys64, Cys67, Cys70, Cys74, Cys104, Cys107, Cys110, and Cys114 each contribute to the [4Fe-4S] cluster site.

It belongs to the complex I 23 kDa subunit family. As to quaternary structure, NDH is composed of at least 16 different subunits, 5 of which are encoded in the nucleus. The cofactor is [4Fe-4S] cluster.

The protein localises to the plastid. Its subcellular location is the chloroplast thylakoid membrane. It carries out the reaction a plastoquinone + NADH + (n+1) H(+)(in) = a plastoquinol + NAD(+) + n H(+)(out). The catalysed reaction is a plastoquinone + NADPH + (n+1) H(+)(in) = a plastoquinol + NADP(+) + n H(+)(out). NDH shuttles electrons from NAD(P)H:plastoquinone, via FMN and iron-sulfur (Fe-S) centers, to quinones in the photosynthetic chain and possibly in a chloroplast respiratory chain. The immediate electron acceptor for the enzyme in this species is believed to be plastoquinone. Couples the redox reaction to proton translocation, and thus conserves the redox energy in a proton gradient. In Gossypium barbadense (Sea Island cotton), this protein is NAD(P)H-quinone oxidoreductase subunit I, chloroplastic.